Here is a 2325-residue protein sequence, read N- to C-terminus: Protein Ycf2 (2325 aa).

3 disordered regions span residues 168 to 189 (SSQLKGSSDQSRDHFDSIGTED), 221 to 251 (TEIESDRFSKGLSGSSSKSRLFTEGEKEMNN), and 947 to 1006 (KRKK…KRKE). Low complexity predominate over residues 230-240 (KGLSGSSSKSR). Composition is skewed to basic and acidic residues over residues 241–250 (LFTEGEKEMN) and 955–1004 (KRKE…PEKR). 1436 to 1443 (GSIGSGRS) serves as a coordination point for ATP. Disordered regions lie at residues 1510–1529 (YEDRDSDDYDEPGASDDYEP), 1855–1996 (LVGS…LLRP), and 2063–2179 (PAEE…DGFS). The segment covering 1861–1976 (TEEEVEGTEE…VEGTEDEEGE (116 aa)) has biased composition (acidic residues). Residues 1977–1989 (GTEKDSSQFDNDR) are compositionally biased toward basic and acidic residues. Composition is skewed to acidic residues over residues 2063-2080 (PAEEIPEEEDPLPEEALE) and 2087-2162 (GEEE…ENDS).

Belongs to the Ycf2 family.

It localises to the plastid. Its subcellular location is the chloroplast stroma. Its function is as follows. Probable ATPase of unknown function. Its presence in a non-photosynthetic plant (Epifagus virginiana) and experiments in tobacco indicate that it has an essential function which is probably not related to photosynthesis. This chain is Protein Ycf2, found in Oenothera biennis (German evening primrose).